The sequence spans 417 residues: FK506-binding protein 3 (417 aa).

Disordered regions lie at residues 42-129 (SLDD…LSPE) and 191-307 (EGCG…DKPK). Acidic residues-rich tracts occupy residues 61–84 (FDDE…EESE), 99–120 (SEEE…EFEE), and 197–222 (CACD…DASD). Basic and acidic residues-rich tracts occupy residues 236-249 (ANEK…EPKA) and 256-307 (DQKD…DKPK). The PPIase FKBP-type domain occupies 331–417 (GARVGMRYIG…TFDVKLVSLK (87 aa)).

This sequence belongs to the FKBP-type PPIase family. FKBP3/4 subfamily.

Its subcellular location is the nucleus. The protein localises to the nucleolus. The enzyme catalyses [protein]-peptidylproline (omega=180) = [protein]-peptidylproline (omega=0). Inhibited by both FK506 and rapamycin. Its function is as follows. PPIases accelerate the folding of proteins. It catalyzes the cis-trans isomerization of proline imidic peptide bonds in oligopeptides. The chain is FK506-binding protein 3 (FPR3) from Eremothecium gossypii (strain ATCC 10895 / CBS 109.51 / FGSC 9923 / NRRL Y-1056) (Yeast).